The chain runs to 320 residues: Ferrochelatase (320 aa).

Fe cation-binding residues include H194 and E275.

It belongs to the ferrochelatase family.

It localises to the cytoplasm. The catalysed reaction is heme b + 2 H(+) = protoporphyrin IX + Fe(2+). It participates in porphyrin-containing compound metabolism; protoheme biosynthesis; protoheme from protoporphyrin-IX: step 1/1. In terms of biological role, catalyzes the ferrous insertion into protoporphyrin IX. The sequence is that of Ferrochelatase from Xylella fastidiosa (strain M23).